A 261-amino-acid polypeptide reads, in one-letter code: MTKPPIGGNRTGRKLGQKVKKGKLKASSRRWLERHINDPYVQRAKLEGYRARAAFKLLEIDEKHNILKGARRIIDLGAAPGSWSQIAANVTGSTDSDIRVAAIDFLEMTQLPGVKILQLDFLDPQAPALLMEAVGGVPDVVISDMAAPTTGHQKTDHIRTMHLCEVAAYFAVEVLAEGGHFLAKTFQGGTEKDLLNMLKQNFKQVIHIKPASSRQESVEMFLLAKGFKGRRSGNALGHEVEDDGPMPHDPREDATADEDQD.

The S-adenosyl-L-methionine site is built by G81, W83, D104, D120, and D144. The Proton acceptor role is filled by K184. Residues 233 to 261 (GNALGHEVEDDGPMPHDPREDATADEDQD) form a disordered region. Over residues 245-254 (PMPHDPREDA) the composition is skewed to basic and acidic residues.

Belongs to the class I-like SAM-binding methyltransferase superfamily. RNA methyltransferase RlmE family.

The protein localises to the cytoplasm. The catalysed reaction is uridine(2552) in 23S rRNA + S-adenosyl-L-methionine = 2'-O-methyluridine(2552) in 23S rRNA + S-adenosyl-L-homocysteine + H(+). Its function is as follows. Specifically methylates the uridine in position 2552 of 23S rRNA at the 2'-O position of the ribose in the fully assembled 50S ribosomal subunit. The polypeptide is Ribosomal RNA large subunit methyltransferase E (Allorhizobium ampelinum (strain ATCC BAA-846 / DSM 112012 / S4) (Agrobacterium vitis (strain S4))).